The sequence spans 323 residues: Aquaporin NIP3-1 (323 aa).

Methionine 1 carries the N-acetylmethionine modification. 2 helical membrane passes run 45-65 (LIGE…AIVV) and 73-93 (VTLP…IYSI). The short motif at 102–104 (NPA) is the NPA 1 element. 3 consecutive transmembrane segments (helical) span residues 122-142 (GYIA…RLVF), 167-187 (TSFV…SAVA), and 196-216 (FAGI…GPIS). The NPA 2 motif lies at 221–223 (NPA). The chain crosses the membrane as a helical span at residues 239-259 (WLYIVSPVIGALSGAWTYGLL).

Belongs to the MIP/aquaporin (TC 1.A.8) family. NIP (TC 1.A.8.12) subfamily.

The protein localises to the membrane. Its function is as follows. Aquaporins facilitate the transport of water and small neutral solutes across cell membranes. The protein is Aquaporin NIP3-1 (NIP3-1) of Arabidopsis thaliana (Mouse-ear cress).